Reading from the N-terminus, the 145-residue chain is 3-dehydroquinate dehydratase (145 aa).

Catalysis depends on Y24, which acts as the Proton acceptor. Positions 75, 81, and 88 each coordinate substrate. The Proton donor role is filled by H102. Residues 103 to 104 (LS) and R113 contribute to the substrate site.

Belongs to the type-II 3-dehydroquinase family. Homododecamer.

The catalysed reaction is 3-dehydroquinate = 3-dehydroshikimate + H2O. It functions in the pathway metabolic intermediate biosynthesis; chorismate biosynthesis; chorismate from D-erythrose 4-phosphate and phosphoenolpyruvate: step 3/7. In terms of biological role, catalyzes a trans-dehydration via an enolate intermediate. The polypeptide is 3-dehydroquinate dehydratase (Chelativorans sp. (strain BNC1)).